A 147-amino-acid chain; its full sequence is uncharacterized protein (147 aa).

The HTH asnC-type domain maps to 2–63 (LDELDKKIIG…KLNYENIGYD (62 aa)). A DNA-binding region (H-T-H motif) is located at residues 21-40 (YREIAKELNVAVGTIYNRIK).

This is an uncharacterized protein from Pyrococcus abyssi (strain GE5 / Orsay).